The sequence spans 117 residues: MNAVTEEIPSPLIFTDNAARKVKELIDEEGSPDLKLRVFVSGGGCSGFQYGFTFEETINEDDTTVDKDGVTLLIDPMSLQYLVGAEIDYQDSLQGSQFVIRNPNATTTCGCGSSFSA.

The iron-sulfur cluster site is built by Cys45, Cys109, and Cys111.

Belongs to the HesB/IscA family. Homodimer. Requires iron-sulfur cluster as cofactor.

Its function is as follows. Required for insertion of 4Fe-4S clusters. The polypeptide is Putative iron-sulfur cluster insertion protein ErpA (Methylobacillus flagellatus (strain ATCC 51484 / DSM 6875 / VKM B-1610 / KT)).